A 520-amino-acid polypeptide reads, in one-letter code: Peptidoglycan-recognition protein LC (520 aa).

Polar residues-rich tracts occupy residues 1–14 (MPFS…QCSN) and 27–36 (KNCSTSSTDS). Disordered stretches follow at residues 1–78 (MPFS…RISV) and 239–278 (DKWK…AQTP). Residues 1–291 (MPFSNETEMS…PFLPNTVGRK (291 aa)) are Cytoplasmic-facing. 2 stretches are compositionally biased toward basic and acidic residues: residues 48–58 (RPEKETKDRGT) and 66–78 (KSEE…RISV). A helical; Signal-anchor for type II membrane protein transmembrane segment spans residues 292–312 (AVTVTVVFVTLTFLLGIVLAT). Residues 313-520 (TTNLFGKTLN…ASFANWTHWS (208 aa)) are Extracellular-facing. N-linked (GlcNAc...) asparagine glycosylation is present at Asn-389. A disulfide bond links Cys-390 and Cys-396. Positions 412–490 (QKCDIAYNFL…KLGKIAPSYR (79 aa)) constitute an N-acetylmuramoyl-L-alanine amidase domain. The N-linked (GlcNAc...) asparagine glycan is linked to Asn-515.

Belongs to the N-acetylmuramoyl-L-alanine amidase 2 family. Proteolytically cleaved, probably by a metaloprotease such as Mmp2; proteolytic cleavage leads to activation of the imd/Relish signaling pathway. In terms of tissue distribution, expressed in the fat body and hemocytes.

The protein resides in the membrane. Its activity is regulated as follows. Activated by proteolytic cleavage in response to Gram-negative bacterial infection; cleavage may be mediated by endogenous proteases, such as the metalloprotease Mmp2 or elastase, or by bacterially expressed proteases such as the surface serine protease OmpT. Major activator of the imd/Relish pathway and is likely to encode a pattern recognition molecule for the humoral immune response. Required for Relish processing and nuclear translocation following proteolytic cleavage. Involved in the response to lipopolysaccharide (LPS) and peptidoglycan of Gram-negative bacteria. The different isoforms probably display different recognition capabilities to various microbial patterns. Its function is as follows. Mediates the response to LPS and Gram-negative bacteria. In terms of biological role, mediates the response to LPS, peptidoglycan and Gram-negative bacteria. This Drosophila melanogaster (Fruit fly) protein is Peptidoglycan-recognition protein LC (PGRP-LC).